The sequence spans 263 residues: Protein phosphatase type 2A regulatory subunit RTS3 (263 aa).

Disordered stretches follow at residues 1–62 (MIAT…AQRR) and 149–176 (LPLT…ISNG). Residues 46–61 (LSTSSSPSSSPMSAQR) are compositionally biased toward low complexity. A phosphoserine mark is found at serine 172, serine 192, serine 214, and serine 238.

Its subcellular location is the cytoplasm. It is found in the nucleus. Its function is as follows. May be a component of a protein phosphatase type 2A (PP2A) complex. Negatively regulates SIT4 phosphatase, a modulators of caffeine sensitivity. The chain is Protein phosphatase type 2A regulatory subunit RTS3 (RTS3) from Saccharomyces cerevisiae (strain ATCC 204508 / S288c) (Baker's yeast).